A 106-amino-acid polypeptide reads, in one-letter code: Large ribosomal subunit protein P1A (106 aa).

S2 is modified (N-acetylserine). Residues 73–106 (GGVAGGEAGEAEAEKEEEEAKEESDDDMGFGLFD) are disordered. Residues 81–100 (GEAEAEKEEEEAKEESDDDM) show a composition bias toward acidic residues. A Phosphoserine modification is found at S96.

It belongs to the eukaryotic ribosomal protein P1/P2 family. As to quaternary structure, component of the large ribosomal subunit (LSU). Mature yeast ribosomes consist of a small (40S) and a large (60S) subunit. The 40S small subunit contains 1 molecule of ribosomal RNA (18S rRNA) and 33 different proteins (encoded by 57 genes). The large 60S subunit contains 3 rRNA molecules (25S, 5.8S and 5S rRNA) and 46 different proteins (encoded by 81 genes). The 5 acidic ribosomal P-proteins form the stalk structure of the 60S subunit. They are organized as a pentameric complex in which uL10/P0 interacts with 2 heterodimers, P1A-P2B and P1B-P2A. In terms of processing, N-terminally acetylated by acetyltransferase NatA.

Its subcellular location is the cytoplasm. Its function is as follows. Component of the ribosome, a large ribonucleoprotein complex responsible for the synthesis of proteins in the cell. The small ribosomal subunit (SSU) binds messenger RNAs (mRNAs) and translates the encoded message by selecting cognate aminoacyl-transfer RNA (tRNA) molecules. The large subunit (LSU) contains the ribosomal catalytic site termed the peptidyl transferase center (PTC), which catalyzes the formation of peptide bonds, thereby polymerizing the amino acids delivered by tRNAs into a polypeptide chain. The nascent polypeptides leave the ribosome through a tunnel in the LSU and interact with protein factors that function in enzymatic processing, targeting, and the membrane insertion of nascent chains at the exit of the ribosomal tunnel. The polypeptide is Large ribosomal subunit protein P1A (Saccharomyces cerevisiae (strain ATCC 204508 / S288c) (Baker's yeast)).